The sequence spans 176 residues: Tubulin polymerization-promoting protein family member 3 (176 aa).

Position 2 is an N-acetylalanine (Ala-2).

The protein belongs to the TPPP family.

The protein localises to the cytoplasm. Its subcellular location is the cytoskeleton. Regulator of microtubule dynamic that has microtubule bundling activity. Required for embryo implantation; possibly by regulating beta-catenin. Also required for decidualization via regulation of beta-catenin. This Bos taurus (Bovine) protein is Tubulin polymerization-promoting protein family member 3 (TPPP3).